The chain runs to 255 residues: Epoxyqueuosine reductase QueH (255 aa).

[4Fe-4S] cluster is bound by residues Cys44, Cys45, Cys128, and Cys131. Cys210 and Cys212 are joined by a disulfide.

This sequence belongs to the QueH family.

The catalysed reaction is epoxyqueuosine(34) in tRNA + AH2 = queuosine(34) in tRNA + A + H2O. Its pathway is tRNA modification; tRNA-queuosine biosynthesis. Its function is as follows. Catalyzes the conversion of epoxyqueuosine (oQ) to queuosine (Q), which is a hypermodified base found in the wobble positions of tRNA(Asp), tRNA(Asn), tRNA(His) and tRNA(Tyr). The polypeptide is Epoxyqueuosine reductase QueH (Streptococcus pyogenes serotype M1).